Here is a 434-residue protein sequence, read N- to C-terminus: Putative nuclease OPG089 (434 aa).

Residues D33, D74, E168, D170, D196, and D198 each coordinate Mg(2+).

Belongs to the XPG/RAD2 endonuclease family. FEN1 subfamily. It depends on Mg(2+) as a cofactor.

The protein localises to the virion. Its function is as follows. Putative nuclease that seems to be required for double-strand break repair, homologous recombination, and production of full-length viral genomic DNA. The protein is Putative nuclease OPG089 (OPG089) of Vaccinia virus (strain Western Reserve) (VACV).